We begin with the raw amino-acid sequence, 218 residues long: Adenylate kinase (218 aa).

Residue 10–15 (GAGKGT) participates in ATP binding. The interval 30-59 (STGDMLRAAVKAGTPLGLQAKAVMDSGSLV) is NMP. AMP contacts are provided by residues threonine 31, arginine 36, 57–59 (SLV), 85–88 (GFPR), and glutamine 92. The segment at 122–159 (GRRSHPASGRTYHVRFNPPKIDGKDDLTGEALLQREDD) is LID. Residues arginine 123 and 132-133 (TY) contribute to the ATP site. 2 residues coordinate AMP: arginine 156 and arginine 167. Glycine 203 contacts ATP.

It belongs to the adenylate kinase family. Monomer.

The protein localises to the cytoplasm. It carries out the reaction AMP + ATP = 2 ADP. The protein operates within purine metabolism; AMP biosynthesis via salvage pathway; AMP from ADP: step 1/1. Its function is as follows. Catalyzes the reversible transfer of the terminal phosphate group between ATP and AMP. Plays an important role in cellular energy homeostasis and in adenine nucleotide metabolism. This chain is Adenylate kinase, found in Verminephrobacter eiseniae (strain EF01-2).